The primary structure comprises 283 residues: Elongation factor Ts (283 aa).

An involved in Mg(2+) ion dislocation from EF-Tu region spans residues 79 to 82; sequence TDFV.

Belongs to the EF-Ts family.

The protein localises to the cytoplasm. Its function is as follows. Associates with the EF-Tu.GDP complex and induces the exchange of GDP to GTP. It remains bound to the aminoacyl-tRNA.EF-Tu.GTP complex up to the GTP hydrolysis stage on the ribosome. The chain is Elongation factor Ts from Shewanella baltica (strain OS155 / ATCC BAA-1091).